A 117-amino-acid polypeptide reads, in one-letter code: uncharacterized protein (117 aa).

This is an uncharacterized protein from Escherichia coli (strain K12).